Consider the following 401-residue polypeptide: Chalcone synthase 6 (401 aa).

The active site involves cysteine 168.

This sequence belongs to the thiolase-like superfamily. Chalcone/stilbene synthases family.

It catalyses the reaction (E)-4-coumaroyl-CoA + 3 malonyl-CoA + 3 H(+) = 2',4,4',6'-tetrahydroxychalcone + 3 CO2 + 4 CoA. It participates in secondary metabolite biosynthesis; flavonoid biosynthesis. Functionally, the primary product of this enzyme is 4,2',4',6'-tetrahydroxychalcone (also termed naringenin-chalcone or chalcone) which can under specific conditions spontaneously isomerize into naringenin. The protein is Chalcone synthase 6 (CHS6) of Sorghum bicolor (Sorghum).